The primary structure comprises 781 residues: MATQADLMELDMAMEPDRKAAVSHWQQQSYLDSGIHSGATTTAPSLSGKGNPEEEDVDTTQVLYEWEQGFSQSFTQEQVADIDGQYAMTRAQRVRAAMFPETLDEGMQIPSTQFDAAHPTNVQRLAEPSQMLKHAVVNLINYQDDAELATRAIPELTKLLNDEDQVVVNKAAVMVHQLSKKEASRHAIMRSPQMVSAIVRTMQNTNDVETARCTAGTLHNLSHHREGLLAIFKSGGIPALVKMLGSPVDSVLFYAITTLHNLLLHQEGAKMAVRLAGGLQKMVALLNKTNVKFLAITTDCLQILAYGNQESKLIILASGGPQALVNIMRTYTYEKLLWTTSRVLKVLSVCSSNKPAIVEAGGMQALGLHLTDPSQRLVQNCLWTLRNLSDAATKQEGMEGLLGTLVQLLGSDDINVVTCAAGILSNLTCNNYKNKMMVCQVGGIEALVRTVLRAGDREDITEPAICALRHLTSRHQEAEMAQNAVRLHYGLPVVVKLLHPPSHWPLIKATVGLIRNLALCPANHAPLREQGAIPRLVQLLVRAHQDTQRRTSMGGTQQQFVEGVRMEEIVEGCTGALHILARDVHNRIVIRGLNTIPLFVQLLYSPIENIQRVAAGVLCELAQDKEAAEAIEAEGATAPLTELLHSRNEGVATYAAAVLFRMSEDKPQDYKKRLSVELTSSLFRTEPMAWNETADLGLDIGAQGEPLGYRQDDPSYRSFHSGGYGQDALGMDPMMEHEMGGHHPGADYPVDGLPDLGHAQDLMDGLPPGDSNQLAWFDTDL.

Ala-2 is subject to N-acetylalanine. The interaction with VCL stretch occupies residues Ala-2–Ser-23. Position 23 is a phosphoserine; by GSK3-beta; alternate (Ser-23). Ser-23 carries O-linked (GlcNAc) serine; alternate glycosylation. Position 29 is a phosphoserine; by GSK3-beta (Ser-29). Residues Ser-33 and Ser-37 each carry the phosphoserine; by GSK3-beta and HIPK2 modification. Residues Gly-34 to Asp-56 are disordered. Thr-41 carries the phosphothreonine; by GSK3-beta modification. Ser-45 carries the phosphoserine modification. Position 49 is an N6-acetyllysine (Lys-49). Tyr-64 carries the post-translational modification Phosphotyrosine; by PTK6. Tyr-142 carries the post-translational modification Phosphotyrosine; by FYN and PTK6. 12 ARM repeats span residues Arg-151–Ser-191, Gln-193–Ser-234, Gly-235–Ala-276, Gly-277–Ser-318, Gly-319–Ala-360, Gly-361–Ser-389, Gly-400–Val-441, Gly-442–Ala-484, Tyr-489–Gln-530, Gly-531–Glu-571, Asn-594–Ala-636, and Thr-637–Lys-666. The tract at residues Leu-156–Leu-178 is interaction with BCL9. A Phosphoserine; by CDK5 modification is found at Ser-191. A Phosphoserine; by CDK5 modification is found at Ser-246. Tyr-331 and Tyr-333 each carry phosphotyrosine. The residue at position 552 (Ser-552) is a Phosphoserine; by AMPK. Thr-556 bears the Phosphothreonine mark. Cys-619 carries the S-nitrosocysteine modification. A Phosphoserine modification is found at Ser-675. A disordered region spans residues Glu-705–Leu-781. The span at Met-734 to Gly-745 shows a compositional bias: basic and acidic residues. The interaction with SCRIB stretch occupies residues Asn-772–Leu-781.

It belongs to the beta-catenin family. Two separate complex-associated pools are found in the cytoplasm. The majority is present as component of an E-cadherin/ catenin adhesion complex composed of at least E-cadherin/CDH1 and beta-catenin/CTNNB1, and possibly alpha-catenin/CTNNA1; the complex is located to adherens junctions. The stable association of CTNNA1 is controversial as CTNNA1 was shown not to bind to F-actin when assembled in the complex. Alternatively, the CTNNA1-containing complex may be linked to F-actin by other proteins such as LIMA1. Another cytoplasmic pool is part of a large complex containing AXIN1, AXIN2, APC, CSNK1A1 and GSK3B that promotes phosphorylation on N-terminal Ser and Thr residues and ubiquitination of CTNNB1 via BTRC and its subsequent degradation by the proteasome. Wnt-dependent activation of DVL antagonizes the action of GSK3B. When GSK3B activity is inhibited the complex dissociates, CTNNB1 is dephosphorylated and is no longer targeted for destruction. The stabilized protein translocates to the nucleus, where it binds TCF/LEF-1 family members, BCL9, BCL9L and possibly also RUVBL1 and CHD8. Binds CTNNBIP and EP300. CTNNB1 forms a ternary complex with LEF1 and EP300 that is disrupted by CTNNBIP1 binding. Interacts with TAX1BP3 (via the PDZ domain); this interaction inhibits the transcriptional activity of CTNNB1. Interacts with AJAP1, BAIAP1, CARM1, CTNNA3, CXADR and PCDH11Y. Binds NHERF1. Interacts with GLIS2 and SLC30A9. Interacts with XIRP1 and MUC1. Interacts with PTPRU (via the cytoplasmic juxtamembrane domain) and with EMD. Interacts with SCRIB. Interacts with TNIK. Interacts with SESTD1 and TRPC4. Interacts directly with AXIN1; the interaction is regulated by CDK2 phosphorylation of AXIN1. Interacts with CAV1. Interacts with TRPV4. The TRPV4 and CTNNB1 complex can interact with CDH1. Interacts with VCL. Interacts with PTPRJ. Interacts with PKT7. Interacts with FAT1 (via the cytoplasmic domain). Interacts with NANOS1 and NDRG2. Interacts with NEK2, CDK2 and CDK5. Interacts with PTK6. Interacts with SOX7; this interaction may lead to proteasomal degradation of active CTNNB1 and thus inhibition of Wnt/beta-catenin-stimulated transcription. Identified in a complex with HINT1 and MITF. Interacts with FHIT. The CTNNB1 and TCF4 complex interacts with PML. Interacts with FERMT2. Identified in a complex with TCF4 and FERMT2. Interacts with RORA. May interact with P-cadherin/CDH3. Interacts with RAPGEF2. Interacts with RNF220. Interacts with CTNND2. Interacts (via the C-terminal region) with CBY1. The complex composed, at least, of APC, CTNNB1 and GSK3B interacts with JPT1; the interaction requires the inactive form of GSK3B (phosphorylated at 'Ser-9'). Interacts with DLG5. Interacts with FAM53B; promoting translocation to the nucleus. Interacts with TMEM170B. Interacts with AHI1. Interacts with GID8. Component of an cadherin:catenin adhesion complex composed of at least of CDH26, beta-catenin/CTNNB1, alpha-catenin/CTNNA1 and p120 catenin/CTNND1. Forms a complex comprising APPL1, RUVBL2, APPL2, HDAC1 and HDAC2. Interacts with IRF2BPL; mediates the ubiquitination and degradation of CTNNB1. Interacts with LMBR1L and AMFR. Interacts with LMBR1L. Interacts with SOX30; prevents interaction of CTNNB1 with TCF7L2/TCF4 and leads to inhibition of Wnt signaling. Interacts with SOX9; inhibiting CTNNB1 activity by competing with the binding sites of TCF/LEF within CTNNB1, thereby inhibiting the Wnt signaling. Interacts with SPN/CD43 cytoplasmic tail. Interacts (when phosphorylated at Tyr-333) with isoform M2 of PKM (PKM2); promoting transcription activation. Interacts with PKP2 (via HEAD domain). Interacts with CDH1. Interacts (when unphosphorylated) with FLYWCH1, perhaps preventing interaction of CTNNB1 with TCF4, and thereby regulating transcription activation; phosphorylation of CTNNB1 may inhibit the interaction. Interacts (via the central armadillo domains) with probable transcriptional regulator ADNP (via N-terminal region); interaction is direct and stabilizes CTNNB1 by modulating its phosphorylation by glycogen synthase kinase-3 beta GSK3B. Interacts with NR5A2. Interacts with DSG2; the interaction promotes localization of CTNNB1 at cell junctions thus reducing its nuclear localization and subsequent transcription of CTNNB1/TCF-target genes. In terms of processing, phosphorylation by GSK3B requires prior phosphorylation of Ser-45 by another kinase. Phosphorylation proceeds then from Thr-41 to Ser-33. Phosphorylated by NEK2. EGF stimulates tyrosine phosphorylation. Phosphorylated on Ser-33 and Ser-37 by HIPK2. This phosphorylation triggers proteasomal degradation. Phosphorylation at Ser-552 by AMPK promotes stabilization of the protein, enhancing TCF/LEF-mediated transcription. Phosphorylation on Ser-191 and Ser-246 by CDK5. Phosphorylation by CDK2 regulates insulin internalization. Phosphorylation by PTK6 at Tyr-64, Tyr-142, Tyr-331 and/or Tyr-333 with the predominant site at Tyr-64 is not essential for inhibition of transcriptional activity. Phosphorylation by SRC at Tyr-333 promotes interaction with isoform M2 of PKM (PKM2); promoting transcription activation. Post-translationally, ubiquitinated by the SCF(BTRC) E3 ligase complex when phosphorylated by GSK3B, leading to its degradation. Ubiquitinated by a E3 ubiquitin ligase complex containing UBE2D1, SIAH1, CACYBP/SIP, SKP1, APC and TBL1X, leading to its subsequent proteasomal degradation. Ubiquitinated and degraded following interaction with SOX9. Ubiquitinated via 'Lys-11'- and 'Lys-29'-linked ubiquitin chains by UBR5, leading to its stabilization. S-nitrosylation at Cys-619 within adherens junctions promotes VEGF-induced, NO-dependent endothelial cell permeability by disrupting interaction with E-cadherin, thus mediating disassembly adherens junctions. In terms of processing, O-glycosylation at Ser-23 decreases nuclear localization and transcriptional activity, and increases localization to the plasma membrane and interaction with E-cadherin CDH1. Post-translationally, deacetylated at Lys-49 by SIRT1.

Its subcellular location is the cytoplasm. The protein localises to the nucleus. It is found in the cytoskeleton. It localises to the cell junction. The protein resides in the adherens junction. Its subcellular location is the cell membrane. The protein localises to the microtubule organizing center. It is found in the centrosome. It localises to the spindle pole. The protein resides in the synapse. Its subcellular location is the cilium basal body. Its function is as follows. Key downstream component of the canonical Wnt signaling pathway. In the absence of Wnt, forms a complex with AXIN1, AXIN2, APC, CSNK1A1 and GSK3B that promotes phosphorylation on N-terminal Ser and Thr residues and ubiquitination of CTNNB1 via BTRC and its subsequent degradation by the proteasome. In the presence of Wnt ligand, CTNNB1 is not ubiquitinated and accumulates in the nucleus, where it acts as a coactivator for transcription factors of the TCF/LEF family, leading to activate Wnt responsive genes. Also acts as a coactivator for other transcription factors, such as NR5A2. Promotes epithelial to mesenchymal transition/mesenchymal to epithelial transition (EMT/MET) via driving transcription of CTNNB1/TCF-target genes. Involved in the regulation of cell adhesion, as component of an E-cadherin:catenin adhesion complex. Acts as a negative regulator of centrosome cohesion. Involved in the CDK2/PTPN6/CTNNB1/CEACAM1 pathway of insulin internalization. Blocks anoikis of malignant kidney and intestinal epithelial cells and promotes their anchorage-independent growth by down-regulating DAPK2. Disrupts PML function and PML-NB formation by inhibiting RANBP2-mediated sumoylation of PML. Promotes neurogenesis by maintaining sympathetic neuroblasts within the cell cycle. Involved in chondrocyte differentiation via interaction with SOX9: SOX9-binding competes with the binding sites of TCF/LEF within CTNNB1, thereby inhibiting the Wnt signaling. Acts as a positive regulator of odontoblast differentiation during mesenchymal tooth germ formation, via promoting the transcription of differentiation factors such as LEF1, BMP2 and BMP4. Activity is repressed in a MSX1-mediated manner at the bell stage of mesenchymal tooth germ formation which prevents premature differentiation of odontoblasts. The protein is Catenin beta-1 of Bos taurus (Bovine).